The following is a 447-amino-acid chain: Gastrin/cholecystokinin type B receptor (447 aa).

The Extracellular portion of the chain corresponds to 1-57; it reads MELLKLNRSVQGTGPGPGASLCRPGAPLLNSSSVGNLSCEPPRIRGAGTRELELAIR. 3 N-linked (GlcNAc...) asparagine glycosylation sites follow: N7, N30, and N36. Residues 58–79 traverse the membrane as a helical segment; it reads ITLYAVIFLMSVGGNMLIIVVL. Over 80-87 the chain is Cytoplasmic; that stretch reads GLSRRLRT. Residues 88–109 form a helical membrane-spanning segment; sequence VTNAFLLSLAVSDLLLAVACMP. Residues 110–131 are Extracellular-facing; that stretch reads FTLLPNLMGTFIFGTVICKAVS. C127 and C205 are disulfide-bonded. The chain crosses the membrane as a helical span at residues 132–150; sequence YLMGVSVSVSTLSLVAIAL. Topologically, residues 151 to 170 are cytoplasmic; it reads ERYSAICRPLQARVWQTRSH. A helical transmembrane segment spans residues 171–189; sequence AARVIVATWLLSGLLMVPY. The Extracellular segment spans residues 190-219; sequence PVYTVVQPVGPRVLQCVHRWPSARVRQTWS. Residues 220 to 242 form a helical membrane-spanning segment; the sequence is VLLLLLLFFIPGVVMAVAYGLIS. The Cytoplasmic portion of the chain corresponds to 243–333; it reads RELYLGLRFD…KLLAKKRVVR (91 aa). The segment at 258-285 is disordered; it reads DSQSRVRNQGGLPGAVHQNGRCRPETGA. A helical membrane pass occupies residues 334 to 355; sequence MLLVIVVLFFLCWLPVYSANTW. At 356 to 373 the chain is on the extracellular side; the sequence is RAFDGPGAHRALSGAPIS. A helical transmembrane segment spans residues 374 to 394; the sequence is FIHLLSYASACVNPLVYCFMH. At 395–447 the chain is on the cytoplasmic side; it reads RRFRQACLETCARCCPRPPRARPRALPDEDPPTPSIASLSRLSYTTISTLGPG. The S-palmitoyl cysteine moiety is linked to residue C408.

Belongs to the G-protein coupled receptor 1 family. In terms of tissue distribution, isoform 1 is expressed in brain, pancreas, stomach, the colon cancer cell line LoVo and the T-lymphoblastoma Jurkat, but not in heart, placenta, liver, lung, skeletal muscle, kidney or the stomach cancer cell line AGS. Expressed at high levels in the small cell lung cancer cell line NCI-H510, at lower levels in NCI-H345, NCI-H69 and GLC-28 cell lines, not expressed in GLC-19 cell line. Within the stomach, expressed at high levels in the mucosa of the gastric fundus and at low levels in the antrum and duodenum. Isoform 2 is present in pancreatic cancer cells and colorectal cancer cells, but not in normal pancreas or colonic mucosa. Isoform 3 is expressed in brain, pancreas, stomach, the stomach cancer cell line AGS and the colon cancer cell line LoVo.

It localises to the cell membrane. Its function is as follows. Receptor for gastrin and cholecystokinin. The CCK-B receptors occur throughout the central nervous system where they modulate anxiety, analgesia, arousal, and neuroleptic activity. This receptor mediates its action by association with G proteins that activate a phosphatidylinositol-calcium second messenger system. Functionally, isoform 2 is constitutively activated and may regulate cancer cell proliferation via a gastrin-independent mechanism. This is Gastrin/cholecystokinin type B receptor from Homo sapiens (Human).